A 464-amino-acid chain; its full sequence is Siroheme synthase (464 aa).

The interval 1 to 203 (MDYLPLFHKL…GQGAEAERLL (203 aa)) is precorrin-2 dehydrogenase /sirohydrochlorin ferrochelatase. NAD(+)-binding positions include 22–23 (EI) and 43–44 (PE). Ser128 bears the Phosphoserine mark. The segment at 216-464 (GEVYLVGAGP…AWFEGSQQDQ (249 aa)) is uroporphyrinogen-III C-methyltransferase. Residue Pro225 coordinates S-adenosyl-L-methionine. Asp248 functions as the Proton acceptor in the catalytic mechanism. Lys270 (proton donor) is an active-site residue. Residues 301 to 303 (GGD), Ile306, 331 to 332 (TA), Met383, and Gly412 contribute to the S-adenosyl-L-methionine site.

This sequence in the N-terminal section; belongs to the precorrin-2 dehydrogenase / sirohydrochlorin ferrochelatase family. The protein in the C-terminal section; belongs to the precorrin methyltransferase family.

The enzyme catalyses uroporphyrinogen III + 2 S-adenosyl-L-methionine = precorrin-2 + 2 S-adenosyl-L-homocysteine + H(+). The catalysed reaction is precorrin-2 + NAD(+) = sirohydrochlorin + NADH + 2 H(+). It carries out the reaction siroheme + 2 H(+) = sirohydrochlorin + Fe(2+). It functions in the pathway cofactor biosynthesis; adenosylcobalamin biosynthesis; precorrin-2 from uroporphyrinogen III: step 1/1. It participates in cofactor biosynthesis; adenosylcobalamin biosynthesis; sirohydrochlorin from precorrin-2: step 1/1. The protein operates within porphyrin-containing compound metabolism; siroheme biosynthesis; precorrin-2 from uroporphyrinogen III: step 1/1. Its pathway is porphyrin-containing compound metabolism; siroheme biosynthesis; siroheme from sirohydrochlorin: step 1/1. It functions in the pathway porphyrin-containing compound metabolism; siroheme biosynthesis; sirohydrochlorin from precorrin-2: step 1/1. In terms of biological role, multifunctional enzyme that catalyzes the SAM-dependent methylations of uroporphyrinogen III at position C-2 and C-7 to form precorrin-2 via precorrin-1. Then it catalyzes the NAD-dependent ring dehydrogenation of precorrin-2 to yield sirohydrochlorin. Finally, it catalyzes the ferrochelation of sirohydrochlorin to yield siroheme. The protein is Siroheme synthase of Pseudomonas putida (strain W619).